Here is a 166-residue protein sequence, read N- to C-terminus: Sec-independent protein translocase protein TatB (166 aa).

A helical membrane pass occupies residues 1-21; sequence MIDIAFSKLAIIGVAALVFIG. The interval 85–146 is disordered; it reads DSSLHSAWDE…SGQKSRVISG (62 aa).

The protein belongs to the TatB family. The Tat system comprises two distinct complexes: a TatABC complex, containing multiple copies of TatA, TatB and TatC subunits, and a separate TatA complex, containing only TatA subunits. Substrates initially bind to the TatABC complex, which probably triggers association of the separate TatA complex to form the active translocon.

Its subcellular location is the cell inner membrane. Part of the twin-arginine translocation (Tat) system that transports large folded proteins containing a characteristic twin-arginine motif in their signal peptide across membranes. Together with TatC, TatB is part of a receptor directly interacting with Tat signal peptides. TatB may form an oligomeric binding site that transiently accommodates folded Tat precursor proteins before their translocation. The chain is Sec-independent protein translocase protein TatB from Herminiimonas arsenicoxydans.